Here is a 539-residue protein sequence, read N- to C-terminus: Histone-arginine methyltransferase CARMER (539 aa).

The 310-residue stretch at 149–458 folds into the SAM-dependent MTase PRMT-type domain; that stretch reads ASQYFQFYGY…QSYDVTIDLH (310 aa). The S-adenosyl-L-methionine site is built by Q162, R171, G195, E217, E246, and T274. Position 509 is an asymmetric dimethylarginine; by autocatalysis (R509).

The protein belongs to the class I-like SAM-binding methyltransferase superfamily. Protein arginine N-methyltransferase family. In terms of assembly, homodimer. In terms of processing, the dimethylated protein is the major form.

It is found in the cytoplasm. It localises to the nucleus. It carries out the reaction L-arginyl-[protein] + 2 S-adenosyl-L-methionine = N(omega),N(omega)-dimethyl-L-arginyl-[protein] + 2 S-adenosyl-L-homocysteine + 2 H(+). Methylates (mono- and asymmetric dimethylation) the guanidino nitrogens of arginyl residues in proteins. May methylate histone H3 at 'Arg-17' and activate transcription via chromatin remodeling. The chain is Histone-arginine methyltransferase CARMER (Art4) from Drosophila mojavensis (Fruit fly).